A 193-amino-acid chain; its full sequence is Large ribosomal subunit protein uL18 (193 aa).

Belongs to the universal ribosomal protein uL18 family. In terms of assembly, part of the 50S ribosomal subunit. Contacts the 5S and 23S rRNAs.

This is one of the proteins that bind and probably mediate the attachment of the 5S RNA into the large ribosomal subunit, where it forms part of the central protuberance. This is Large ribosomal subunit protein uL18 from Methanococcus vannielii (strain ATCC 35089 / DSM 1224 / JCM 13029 / OCM 148 / SB).